The chain runs to 308 residues: Ecto-ADP-ribosyltransferase 5 (308 aa).

Positions 1–23 (MILEDLLMVLSCLALHILWKVQA) are cleaved as a signal peptide. C43 and C259 are disulfide-bonded. The 191-residue stretch at 63–253 (ALLRESWEAA…IVTLWSYNQT (191 aa)) folds into the TR mART core domain. Residue Y100 coordinates NAD(+). Residue N102 is glycosylated (N-linked (GlcNAc...) asparagine). NAD(+) contacts are provided by R161 and Q181. The active site involves R161. The active site involves S184. A glycan (N-linked (GlcNAc...) asparagine) is linked at N197. NAD(+) is bound at residue S215. Residue E222 is part of the active site. N-linked (GlcNAc...) asparagine glycosylation is present at N251.

Belongs to the Arg-specific ADP-ribosyltransferase family.

It localises to the secreted. It is found in the membrane. The enzyme catalyses L-arginyl-[protein] + NAD(+) = N(omega)-(ADP-D-ribosyl)-L-arginyl-[protein] + nicotinamide + H(+). In Rattus norvegicus (Rat), this protein is Ecto-ADP-ribosyltransferase 5 (Art5).